Here is a 263-residue protein sequence, read N- to C-terminus: Chromosomal replication initiator protein DnaA (263 aa).

A region of interest (domain I, interacts with DnaA modulators) is located at residue Glu1. A region of interest (domain II) is located at residue Glu1. The tract at residues 1–179 is domain III, AAA+ region; that stretch reads ESGMGKTHLL…GSVSRLNFWS (179 aa). ATP contacts are provided by Gly3, Gly5, Lys6, and Thr7. The interval 180–263 is domain IV, binds dsDNA; sequence QQNPEEKIIT…HTLAQIGEEF (84 aa).

This sequence belongs to the DnaA family. As to quaternary structure, oligomerizes as a right-handed, spiral filament on DNA at oriC.

The protein localises to the cytoplasm. Functionally, plays an essential role in the initiation and regulation of chromosomal replication. ATP-DnaA binds to the origin of replication (oriC) to initiate formation of the DNA replication initiation complex once per cell cycle. Binds the DnaA box (a 9 base pair repeat at the origin) and separates the double-stranded (ds)DNA. Forms a right-handed helical filament on oriC DNA; dsDNA binds to the exterior of the filament while single-stranded (ss)DNA is stabiized in the filament's interior. The ATP-DnaA-oriC complex binds and stabilizes one strand of the AT-rich DNA unwinding element (DUE), permitting loading of DNA polymerase. After initiation quickly degrades to an ADP-DnaA complex that is not apt for DNA replication. Binds acidic phospholipids. The sequence is that of Chromosomal replication initiator protein DnaA from Mycoplasma mycoides.